The following is a 147-amino-acid chain: Large ribosomal subunit protein uL22 (147 aa).

The interval 110–147 (EEKKTVAKKAPAAKKTTTTKAPAKKTTSTKKATAKKES) is disordered. The span at 117 to 140 (KKAPAAKKTTTTKAPAKKTTSTKK) shows a compositional bias: low complexity.

This sequence belongs to the universal ribosomal protein uL22 family. In terms of assembly, part of the 50S ribosomal subunit.

Its function is as follows. This protein binds specifically to 23S rRNA; its binding is stimulated by other ribosomal proteins, e.g. L4, L17, and L20. It is important during the early stages of 50S assembly. It makes multiple contacts with different domains of the 23S rRNA in the assembled 50S subunit and ribosome. Functionally, the globular domain of the protein is located near the polypeptide exit tunnel on the outside of the subunit, while an extended beta-hairpin is found that lines the wall of the exit tunnel in the center of the 70S ribosome. This is Large ribosomal subunit protein uL22 from Campylobacter jejuni subsp. jejuni serotype O:23/36 (strain 81-176).